Reading from the N-terminus, the 657-residue chain is Histidine ammonia-lyase (657 aa).

Positions 253-255 (ASG) form a cross-link, 5-imidazolinone (Ala-Gly). The residue at position 254 (S254) is a 2,3-didehydroalanine (Ser). T396 is modified (phosphothreonine). The residue at position 635 (S635) is a Phosphoserine. Phosphothreonine is present on T637. The residue at position 648 (S648) is a Phosphoserine.

The protein belongs to the PAL/histidase family. In terms of processing, contains an active site 4-methylidene-imidazol-5-one (MIO), which is formed autocatalytically by cyclization and dehydration of residues Ala-Ser-Gly. In terms of tissue distribution, liver and skin.

It catalyses the reaction L-histidine = trans-urocanate + NH4(+). The protein operates within amino-acid degradation; L-histidine degradation into L-glutamate; N-formimidoyl-L-glutamate from L-histidine: step 1/3. In Rattus norvegicus (Rat), this protein is Histidine ammonia-lyase (Hal).